Consider the following 792-residue polypeptide: Phenylalanine--tRNA ligase beta subunit (792 aa).

Residues 39–147 (GESLGQVVVA…DDAPVGQALA (109 aa)) form the tRNA-binding domain. One can recognise a B5 domain in the interval 400–475 (PQPARILLRR…RIHGYDRVPT (76 aa)). Mg(2+) is bound by residues aspartate 453, aspartate 459, glutamate 462, and aspartate 463. In terms of domain architecture, FDX-ACB spans 698-791 (SRFPSVRRDL…IEREHRARIR (94 aa)).

It belongs to the phenylalanyl-tRNA synthetase beta subunit family. Type 1 subfamily. Tetramer of two alpha and two beta subunits. Mg(2+) is required as a cofactor.

The protein localises to the cytoplasm. The enzyme catalyses tRNA(Phe) + L-phenylalanine + ATP = L-phenylalanyl-tRNA(Phe) + AMP + diphosphate + H(+). The protein is Phenylalanine--tRNA ligase beta subunit of Xanthomonas oryzae pv. oryzae (strain KACC10331 / KXO85).